Here is a 660-residue protein sequence, read N- to C-terminus: Acetyl-coenzyme A synthetase (660 aa).

CoA contacts are provided by residues 197–200 (RGGK) and threonine 317. ATP-binding positions include 397–399 (GEP), 421–426 (DTFWQT), aspartate 512, and arginine 528. Serine 536 is a CoA binding site. Residue arginine 539 participates in ATP binding. Residues valine 550 and valine 555 each coordinate Mg(2+). Lysine 625 is modified (N6-acetyllysine).

The protein belongs to the ATP-dependent AMP-binding enzyme family. Mg(2+) is required as a cofactor. Post-translationally, acetylated. Deacetylation by the SIR2-homolog deacetylase activates the enzyme.

The catalysed reaction is acetate + ATP + CoA = acetyl-CoA + AMP + diphosphate. In terms of biological role, catalyzes the conversion of acetate into acetyl-CoA (AcCoA), an essential intermediate at the junction of anabolic and catabolic pathways. AcsA undergoes a two-step reaction. In the first half reaction, AcsA combines acetate with ATP to form acetyl-adenylate (AcAMP) intermediate. In the second half reaction, it can then transfer the acetyl group from AcAMP to the sulfhydryl group of CoA, forming the product AcCoA. The polypeptide is Acetyl-coenzyme A synthetase (Ralstonia nicotianae (strain ATCC BAA-1114 / GMI1000) (Ralstonia solanacearum)).